We begin with the raw amino-acid sequence, 186 residues long: Ribosome-recycling factor (186 aa).

It belongs to the RRF family.

Its subcellular location is the cytoplasm. Its function is as follows. Responsible for the release of ribosomes from messenger RNA at the termination of protein biosynthesis. May increase the efficiency of translation by recycling ribosomes from one round of translation to another. This is Ribosome-recycling factor from Brucella melitensis biotype 2 (strain ATCC 23457).